The following is a 213-amino-acid chain: Uridine kinase (213 aa).

15 to 22 (GASASGKS) provides a ligand contact to ATP.

Belongs to the uridine kinase family.

The protein localises to the cytoplasm. It carries out the reaction uridine + ATP = UMP + ADP + H(+). It catalyses the reaction cytidine + ATP = CMP + ADP + H(+). The protein operates within pyrimidine metabolism; CTP biosynthesis via salvage pathway; CTP from cytidine: step 1/3. It participates in pyrimidine metabolism; UMP biosynthesis via salvage pathway; UMP from uridine: step 1/1. The polypeptide is Uridine kinase (Pectobacterium carotovorum subsp. carotovorum (strain PC1)).